A 460-amino-acid polypeptide reads, in one-letter code: Ammonium transporter Rh type B-B (460 aa).

The Cytoplasmic segment spans residues 1-10 (MTSYSTNMRI). A helical transmembrane segment spans residues 11–31 (KLPLFCLLLQFITIILFAVFV). Topologically, residues 32–62 (RYDHESDARGWHEELNNHSSSNADNDFYYRY) are extracellular. Asparagine 48 is a glycosylation site (N-linked (GlcNAc...) asparagine). The helical transmembrane segment at 63–83 (PSFQDVHVMIFIGFGFLMTFL) threads the bilayer. The Cytoplasmic portion of the chain corresponds to 84-87 (KRYG). The chain crosses the membrane as a helical span at residues 88 to 108 (FSSVAFNFLIAAFGLQWSTLI). Topologically, residues 109 to 125 (QGFFHGFHDGKIHVGIE) are extracellular. The helical transmembrane segment at 126–146 (SMINADFCTGAVLISFGAVLG) threads the bilayer. The Cytoplasmic portion of the chain corresponds to 147–150 (KTSP). Residues 151–171 (VQLIIMTLVEVTLFGINEYII) form a helical membrane-spanning segment. Residues 172 to 179 (LNIVGAKD) lie on the Extracellular side of the membrane. Residues 180–202 (AGGSMTIHTFGAYFGLIVSRVLY) form a helical membrane-spanning segment. Over 203–220 (REDLEKSRQREGSVYHSD) the chain is Cytoplasmic. Residues 221-241 (LFAMIGTIYLWMFWPSFNSAV) traverse the membrane as a helical segment. At 242-252 (TAHGDDQHRTV) the chain is on the extracellular side. Residues 253 to 273 (MNTYYSLAACTLATFGFSALL) form a helical membrane-spanning segment. Over 274-283 (NGEGKLDMVH) the chain is Cytoplasmic. Residues 284 to 304 (IQNAALAGGVAVGTSGEMMLT) traverse the membrane as a helical segment. Residue proline 305 is a topological domain, extracellular. Residues 306–326 (FGAMIAGTLAGMISVLGYKYL) form a helical membrane-spanning segment. At 327-347 (TPVLDSKLKIQDTCGVHNLHG) the chain is on the cytoplasmic side. Residues 348–368 (MPGILGAIIGAIVALFATADI) traverse the membrane as a helical segment. Residues 369–394 (YGDGMGDVFPLISDGSRTAKQQSLYQ) lie on the Extracellular side of the membrane. A helical transmembrane segment spans residues 395 to 415 (FLALLVALGFAIIGGTVVGFI). Residues 416 to 460 (LKLPIFGTPSDAECFEDAIYWEVPGGEGHQQLTVVINNEDPDTQA) are Cytoplasmic-facing.

Belongs to the ammonium transporter (TC 2.A.49) family. Rh subfamily.

The protein localises to the basolateral cell membrane. The protein resides in the cytoplasmic vesicle membrane. Its function is as follows. Functions as a specific ammonium transporter. This is Ammonium transporter Rh type B-B (rhbg-b) from Xenopus laevis (African clawed frog).